A 371-amino-acid polypeptide reads, in one-letter code: Methylthioribose-1-phosphate isomerase (371 aa).

Substrate is bound by residues 53–55 (RGA), Arg-90, and Gln-203. Catalysis depends on Asp-243, which acts as the Proton donor. 253-254 (NK) provides a ligand contact to substrate.

The protein belongs to the eIF-2B alpha/beta/delta subunits family. MtnA subfamily.

The catalysed reaction is 5-(methylsulfanyl)-alpha-D-ribose 1-phosphate = 5-(methylsulfanyl)-D-ribulose 1-phosphate. It carries out the reaction 5-deoxy-alpha-D-ribose 1-phosphate = 5-deoxy-D-ribulose 1-phosphate. It functions in the pathway amino-acid biosynthesis; L-methionine biosynthesis via salvage pathway; L-methionine from S-methyl-5-thio-alpha-D-ribose 1-phosphate: step 1/6. In terms of biological role, catalyzes the interconversion of methylthioribose-1-phosphate (MTR-1-P) into methylthioribulose-1-phosphate (MTRu-1-P). Also catalyzes the interconversion of 5-deoxyribose 1-phosphate and 5-deoxyribulose 1-phosphate. Part of a bifunctional DHAP-shunt salvage pathway for SAM by-products. This chain is Methylthioribose-1-phosphate isomerase, found in Escherichia coli O45:K1 (strain S88 / ExPEC).